Consider the following 1331-residue polypeptide: Sodium-dependent transporter bedraggled (1331 aa).

Positions 1 to 62 are disordered; the sequence is MSSKEQQAAG…QLEHEQFGLS (62 aa). Residues 16–25 are compositionally biased toward polar residues; it reads NSNAYSSLPP. Gly residues predominate over residues 28–43; sequence TGAGCSGAALGSGTGT. N168 is a glycosylation site (N-linked (GlcNAc...) asparagine). Disordered regions lie at residues 221–284 and 363–473; these read EPRT…TEPV and QTNA…SASS. Residues 258–282 are compositionally biased toward polar residues; sequence KTFSCSLRPTSQIASSSGSLETSTE. Positions 369 to 383 are enriched in basic and acidic residues; the sequence is SSEEPRPRQYGRRLE. The segment covering 413–436 has biased composition (polar residues); it reads LQDTPTHPIMSTCSELSSARSSRM. A compositionally biased stretch (low complexity) spans 437 to 453; sequence PSPVSLPSDSSSSGSSS. A compositionally biased stretch (polar residues) spans 463-473; it reads VQTTTMCSASS. The next 3 membrane-spanning stretches (helical) occupy residues 505–525, 531–551, and 567–587; these read LALI…VLTI, FLLQ…WLQM, and ISPI…FLAL. N-linked (GlcNAc...) asparagine glycosylation is found at N627 and N631. 4 consecutive transmembrane segments (helical) span residues 667-687, 696-716, 741-761, and 778-798; these read QLAF…CKGL, IIYT…VYVV, TAAT…VIAI, and AILL…LALC. N857 carries N-linked (GlcNAc...) asparagine glycosylation. The helical transmembrane segment at 890-910 threads the bilayer; that stretch reads WVWAAVAFATFAGFGLAQLCV. N-linked (GlcNAc...) asparagine glycosylation occurs at N921. 4 consecutive transmembrane segments (helical) span residues 926–946, 956–976, 998–1018, and 1044–1064; these read VLLS…EMGI, LGGS…VFLI, AFLA…LSVV, and MGSL…IIQI. Disordered regions lie at residues 1086–1136, 1169–1238, and 1256–1275; these read PEEG…SYTT, SLDA…ASTL, and VRHR…TLPR. Composition is skewed to polar residues over residues 1097 to 1115 and 1186 to 1196; these read ARQT…TTEG and ILTNPAGSSFN. Over residues 1197–1209 the composition is skewed to low complexity; it reads ADPSPASSSSPES.

Belongs to the sodium:neurotransmitter symporter (SNF) (TC 2.A.22) family.

It localises to the membrane. Putative sodium-dependent transporter which is required for viability, early imaginal disk development and adult motor coordination. Also has a role in the fate commitment of the R3/R4 photoreceptor cells. May function in ommatidial polarity by regulating the activity of the core polarity genes, acting upstream of (or in parallel to) Vang, dsh, pk, stan, and dgo, but downstream or independently of fz. The protein is Sodium-dependent transporter bedraggled of Drosophila melanogaster (Fruit fly).